The chain runs to 331 residues: Inner membrane ABC transporter permease protein YjfF (331 aa).

At 1–5 (MIKRN) the chain is on the cytoplasmic side. A helical membrane pass occupies residues 6–26 (LPLMITIGVFVLGYLYCLTQF). Residues 27 to 42 (PGFASTRVICNILTDN) are Periplasmic-facing. Residues 43-63 (AFLGIIAVGMTFVILSGGIDL) traverse the membrane as a helical segment. At 64–88 (SVGSVIAFTGVFLAKVIGDFGLSPL) the chain is on the cytoplasmic side. A helical membrane pass occupies residues 89-109 (LAFPLVLVMGCAFGAFMGLLI). Residues 110 to 113 (DALK) are Periplasmic-facing. A helical membrane pass occupies residues 114-134 (IPAFIITLAGMFFLRGVSYLV). Residues 135 to 159 (SEESIPINHPIYDTLSSLAWKIPGG) lie on the Cytoplasmic side of the membrane. The chain crosses the membrane as a helical span at residues 160–180 (GRLSAMGLLMLAVVVIGIFLA). Residues 181-222 (HRTRFGNQVYAIGGNATSANLMGISTRSTTIRIYMLSTGLAT) are Periplasmic-facing. Residues 223–243 (LAGIVFSIYTQAGYALAGVGV) traverse the membrane as a helical segment. The Cytoplasmic portion of the chain corresponds to 244-250 (ELDAIAS). A helical membrane pass occupies residues 251 to 271 (VVIGGTLLSGGVGTVLGTLFG). Over 272-294 (VAIQGLIQTYINFDGTLSSWWTK) the chain is Periplasmic. Residues 295–315 (IAIGILLFIFIALQRGLTVLW) form a helical membrane-spanning segment. Topologically, residues 316 to 331 (ENRQSSPVTRVNIAQQ) are cytoplasmic.

This sequence belongs to the binding-protein-dependent transport system permease family. AraH/RbsC subfamily. In terms of assembly, the complex is composed of two ATP-binding proteins (YtfR), two transmembrane proteins (YtfT and YjfF) and a solute-binding protein (YtfQ).

The protein resides in the cell inner membrane. In terms of biological role, part of the ABC transporter complex YtfQRT-YjfF involved in galactofuranose transport. Probably responsible for the translocation of the substrate across the membrane. In Escherichia coli (strain K12), this protein is Inner membrane ABC transporter permease protein YjfF (yjfF).